Here is a 350-residue protein sequence, read N- to C-terminus: Inositol 2-dehydrogenase/D-chiro-inositol 3-dehydrogenase (350 aa).

It belongs to the Gfo/Idh/MocA family. As to quaternary structure, homotetramer.

The enzyme catalyses myo-inositol + NAD(+) = scyllo-inosose + NADH + H(+). The catalysed reaction is 1D-chiro-inositol + NAD(+) = scyllo-inosine + NADH + H(+). Its pathway is polyol metabolism; myo-inositol degradation into acetyl-CoA; acetyl-CoA from myo-inositol: step 1/7. In terms of biological role, involved in the oxidation of myo-inositol (MI) and D-chiro-inositol (DCI) to 2-keto-myo-inositol (2KMI or 2-inosose) and 1-keto-D-chiro-inositol (1KDCI), respectively. This is Inositol 2-dehydrogenase/D-chiro-inositol 3-dehydrogenase from Lactiplantibacillus plantarum (strain ATCC BAA-793 / NCIMB 8826 / WCFS1) (Lactobacillus plantarum).